A 375-amino-acid chain; its full sequence is Aminomethyltransferase (375 aa).

It belongs to the GcvT family. In terms of assembly, the glycine cleavage system is composed of four proteins: P, T, L and H.

It catalyses the reaction N(6)-[(R)-S(8)-aminomethyldihydrolipoyl]-L-lysyl-[protein] + (6S)-5,6,7,8-tetrahydrofolate = N(6)-[(R)-dihydrolipoyl]-L-lysyl-[protein] + (6R)-5,10-methylene-5,6,7,8-tetrahydrofolate + NH4(+). In terms of biological role, the glycine cleavage system catalyzes the degradation of glycine. The protein is Aminomethyltransferase of Symbiobacterium thermophilum (strain DSM 24528 / JCM 14929 / IAM 14863 / T).